The chain runs to 180 residues: MSETKQTVFDRLLQERIVWLGEAIDDKLANEICAKILLLNADDPKEDIFLYINSPGGSITAGMAIYDTMQFVSNDIVTVGIGMAASMGQVLLTSGTQNKRYIMPNARVLLHQPLAGFGGTASDIQTQAKLILDMKYRLSQITASRTGKTVEQIMEDGDRDHWFTAEEALEYGFVDHIRTE.

Serine 86 (nucleophile) is an active-site residue. Histidine 111 is an active-site residue.

The protein belongs to the peptidase S14 family. Fourteen ClpP subunits assemble into 2 heptameric rings which stack back to back to give a disk-like structure with a central cavity, resembling the structure of eukaryotic proteasomes.

It localises to the cytoplasm. The catalysed reaction is Hydrolysis of proteins to small peptides in the presence of ATP and magnesium. alpha-casein is the usual test substrate. In the absence of ATP, only oligopeptides shorter than five residues are hydrolyzed (such as succinyl-Leu-Tyr-|-NHMec, and Leu-Tyr-Leu-|-Tyr-Trp, in which cleavage of the -Tyr-|-Leu- and -Tyr-|-Trp bonds also occurs).. Its function is as follows. Cleaves peptides in various proteins in a process that requires ATP hydrolysis. Has a chymotrypsin-like activity. Plays a major role in the degradation of misfolded proteins. This Tropheryma whipplei (strain Twist) (Whipple's bacillus) protein is ATP-dependent Clp protease proteolytic subunit 2.